The following is a 1099-amino-acid chain: ATP-dependent helicase/deoxyribonuclease subunit B (1099 aa).

[4Fe-4S] cluster contacts are provided by Cys-766, Cys-1056, Cys-1059, and Cys-1065.

The protein belongs to the helicase family. AddB/RexB type 2 subfamily. As to quaternary structure, heterodimer of AddA and RexB. Mg(2+) serves as cofactor. It depends on [4Fe-4S] cluster as a cofactor.

Functionally, the heterodimer acts as both an ATP-dependent DNA helicase and an ATP-dependent, dual-direction single-stranded exonuclease. Recognizes the chi site generating a DNA molecule suitable for the initiation of homologous recombination. This subunit has 5' -&gt; 3' nuclease activity but not helicase activity. The sequence is that of ATP-dependent helicase/deoxyribonuclease subunit B from Lactococcus lactis subsp. cremoris (strain SK11).